A 278-amino-acid polypeptide reads, in one-letter code: Small ribosomal subunit protein uS2 (278 aa).

Disordered stretches follow at residues 216–235 (EAAA…TQWD) and 250–278 (NFAA…EWTN). Residues 256–278 (ADGNWGATTGGDWAAAGGEEWTN) show a composition bias toward low complexity.

Belongs to the universal ribosomal protein uS2 family. Component of the small ribosomal subunit. Mature ribosomes consist of a small (40S) and a large (60S) subunit. The 40S subunit contains about 33 different proteins and 1 molecule of RNA (18S). The 60S subunit contains about 49 different proteins and 3 molecules of RNA (25S, 5.8S and 5S). Interacts with ribosomal protein S21.

The protein resides in the cytoplasm. Its function is as follows. Required for the assembly and/or stability of the 40S ribosomal subunit. Required for the processing of the 20S rRNA-precursor to mature 18S rRNA in a late step of the maturation of 40S ribosomal subunits. The sequence is that of Small ribosomal subunit protein uS2 from Monosiga brevicollis (Choanoflagellate).